The chain runs to 263 residues: Indole-3-glycerol phosphate synthase (263 aa).

Belongs to the TrpC family.

The enzyme catalyses 1-(2-carboxyphenylamino)-1-deoxy-D-ribulose 5-phosphate + H(+) = (1S,2R)-1-C-(indol-3-yl)glycerol 3-phosphate + CO2 + H2O. It participates in amino-acid biosynthesis; L-tryptophan biosynthesis; L-tryptophan from chorismate: step 4/5. The chain is Indole-3-glycerol phosphate synthase from Aliarcobacter butzleri (strain RM4018) (Arcobacter butzleri).